Reading from the N-terminus, the 1033-residue chain is Putative U-box domain-containing protein 42 (1033 aa).

The segment at 145–226 is disordered; that stretch reads SQSQMTDIPD…SSNASSQRKY (82 aa). The segment covering 200–226 has biased composition (polar residues); it reads LSKSQSQSTEIPDIPSQSSNASSQRKY. In terms of domain architecture, U-box spans 245–322; the sequence is PPYQAFICPL…QEWKVRNEAA (78 aa). ARM repeat units lie at residues 483-522, 523-562, 564-608, 610-659, and 665-704; these read PENI…EIDI, GHEK…HISL, HPNN…NILE, GLEH…SLSK, and ATIV…ALTP.

The enzyme catalyses S-ubiquitinyl-[E2 ubiquitin-conjugating enzyme]-L-cysteine + [acceptor protein]-L-lysine = [E2 ubiquitin-conjugating enzyme]-L-cysteine + N(6)-ubiquitinyl-[acceptor protein]-L-lysine.. It functions in the pathway protein modification; protein ubiquitination. Functions as an E3 ubiquitin ligase. The chain is Putative U-box domain-containing protein 42 (PUB42) from Arabidopsis thaliana (Mouse-ear cress).